Here is a 654-residue protein sequence, read N- to C-terminus: DNA ligase (654 aa).

Residues 32 to 36 and 81 to 82 contribute to the NAD(+) site; these read DAVYD and SL. Lys-112 (N6-AMP-lysine intermediate) is an active-site residue. NAD(+) is bound by residues Arg-133, Glu-167, and Lys-306. Residues Cys-400, Cys-403, Cys-416, and Cys-421 each contribute to the Zn(2+) site. Positions 577 to 654 constitute a BRCT domain; that stretch reads ESSSIFSHKT…EEELLKYLKE (78 aa).

It belongs to the NAD-dependent DNA ligase family. LigA subfamily. Requires Mg(2+) as cofactor. The cofactor is Mn(2+).

The enzyme catalyses NAD(+) + (deoxyribonucleotide)n-3'-hydroxyl + 5'-phospho-(deoxyribonucleotide)m = (deoxyribonucleotide)n+m + AMP + beta-nicotinamide D-nucleotide.. In terms of biological role, DNA ligase that catalyzes the formation of phosphodiester linkages between 5'-phosphoryl and 3'-hydroxyl groups in double-stranded DNA using NAD as a coenzyme and as the energy source for the reaction. It is essential for DNA replication and repair of damaged DNA. This chain is DNA ligase, found in Helicobacter acinonychis (strain Sheeba).